The following is a 439-amino-acid chain: Trigger factor (439 aa).

A PPIase FKBP-type domain is found at 158–233 (GDVINIEYTI…IKEVLKRTLM (76 aa)). Residues 410-439 (KEISADEPVEEQKEEEEKEEAGSENSENKE) form a disordered region. Residues 414 to 428 (ADEPVEEQKEEEEKE) are compositionally biased toward acidic residues.

Belongs to the FKBP-type PPIase family. Tig subfamily.

The protein resides in the cytoplasm. The catalysed reaction is [protein]-peptidylproline (omega=180) = [protein]-peptidylproline (omega=0). Involved in protein export. Acts as a chaperone by maintaining the newly synthesized protein in an open conformation. Functions as a peptidyl-prolyl cis-trans isomerase. This is Trigger factor from Kosmotoga olearia (strain ATCC BAA-1733 / DSM 21960 / TBF 19.5.1).